Reading from the N-terminus, the 388-residue chain is Probable serine/threonine-protein kinase PBL20 (388 aa).

Residue Cys-3 is the site of S-palmitoyl cysteine attachment. Residues 91-372 (FSRKLKIGEG…FVVESLTNII (282 aa)) enclose the Protein kinase domain. ATP-binding positions include 97 to 105 (IGEGGFGSV) and Lys-128. Asp-221 acts as the Proton acceptor in catalysis.

Belongs to the protein kinase superfamily. Ser/Thr protein kinase family.

Its subcellular location is the cell membrane. It carries out the reaction L-seryl-[protein] + ATP = O-phospho-L-seryl-[protein] + ADP + H(+). The catalysed reaction is L-threonyl-[protein] + ATP = O-phospho-L-threonyl-[protein] + ADP + H(+). In terms of biological role, may be involved in plant defense signaling. This is Probable serine/threonine-protein kinase PBL20 from Arabidopsis thaliana (Mouse-ear cress).